Here is a 197-residue protein sequence, read N- to C-terminus: MAIAPIRIVGDPVLHTPTAPVQVAADGSLPANLNGLISTMYDTMDAAHGVGLAANQIGYGLRVFVYDCAEDCRQTARRRGVVINPILETSEIPETMPDPDTDNEGCLSVPGESFPIGRAQWARVTGLDADGNPVTTEGTGLFARMLQHETGHLDGFLYLDYLIGRHARSAKRAIKSRHWGVPGLSWMPGEVPDPFGP.

Fe cation-binding residues include cysteine 106 and histidine 148. Residue glutamate 149 is part of the active site. Position 152 (histidine 152) interacts with Fe cation.

This sequence belongs to the polypeptide deformylase family. It depends on Fe(2+) as a cofactor.

The catalysed reaction is N-terminal N-formyl-L-methionyl-[peptide] + H2O = N-terminal L-methionyl-[peptide] + formate. In terms of biological role, removes the formyl group from the N-terminal Met of newly synthesized proteins. Requires at least a dipeptide for an efficient rate of reaction. N-terminal L-methionine is a prerequisite for activity but the enzyme has broad specificity at other positions. This is Peptide deformylase from Mycobacterium leprae (strain TN).